The chain runs to 44 residues: Thymosin beta-10 (44 aa).

Belongs to the thymosin beta family.

It localises to the cytoplasm. The protein resides in the cytoskeleton. Its function is as follows. Plays an important role in the organization of the cytoskeleton. Binds to and sequesters actin monomers (G actin) and therefore inhibits actin polymerization. In Torpedo marmorata (Marbled electric ray), this protein is Thymosin beta-10.